A 221-amino-acid polypeptide reads, in one-letter code: Cytidylate kinase 1 (221 aa).

Position 7-15 (7-15 (GPSASGKSS)) interacts with ATP.

The protein belongs to the cytidylate kinase family. Type 1 subfamily.

The protein localises to the cytoplasm. It carries out the reaction CMP + ATP = CDP + ADP. The enzyme catalyses dCMP + ATP = dCDP + ADP. This is Cytidylate kinase 1 from Borreliella burgdorferi (strain ATCC 35210 / DSM 4680 / CIP 102532 / B31) (Borrelia burgdorferi).